The following is an 877-amino-acid chain: Leucine--tRNA ligase (877 aa).

Positions 43–53 (PYPSGRIHMGH) match the 'HIGH' region motif. The short motif at 628-632 (KMSKS) is the 'KMSKS' region element. ATP is bound at residue Lys-631.

The protein belongs to the class-I aminoacyl-tRNA synthetase family.

It localises to the cytoplasm. The catalysed reaction is tRNA(Leu) + L-leucine + ATP = L-leucyl-tRNA(Leu) + AMP + diphosphate. This chain is Leucine--tRNA ligase, found in Brucella abortus (strain S19).